A 294-amino-acid polypeptide reads, in one-letter code: tRNA dimethylallyltransferase (294 aa).

G10–T17 provides a ligand contact to ATP. T12 to T17 is a binding site for substrate. The tract at residues D35–Q38 is interaction with substrate tRNA.

It belongs to the IPP transferase family. In terms of assembly, monomer. Mg(2+) serves as cofactor.

It carries out the reaction adenosine(37) in tRNA + dimethylallyl diphosphate = N(6)-dimethylallyladenosine(37) in tRNA + diphosphate. Its function is as follows. Catalyzes the transfer of a dimethylallyl group onto the adenine at position 37 in tRNAs that read codons beginning with uridine, leading to the formation of N6-(dimethylallyl)adenosine (i(6)A). In Streptococcus pneumoniae serotype 2 (strain D39 / NCTC 7466), this protein is tRNA dimethylallyltransferase.